A 1657-amino-acid polypeptide reads, in one-letter code: Thrombospondin type-1 domain-containing protein 7A (1657 aa).

A signal peptide spans 1 to 47 (MGLQARRWASGSRGAAGPRRGVLQLLPLPLPLPLLLLLLLRPGAGRA). Over 48-1607 (AAQGEAEAPT…FGPDGRLKTW (1560 aa)) the chain is Extracellular. TSP type-1 domains follow at residues 57–116 (TLYL…KVCD), 120–192 (ELYD…IPCQ), and 194–247 (DCIV…SPCE). N234 is a glycosylation site (N-linked (GlcNAc...) asparagine). The segment at 265 to 311 (MPHSRQVRQARRRGKNKEREKDRSKGVKDPEARELIKKKRNRNRQNR) is disordered. Residues 267-315 (HSRQVRQARRRGKNKEREKDRSKGVKDPEARELIKKKRNRNRQNRQENK) are a coiled coil. Basic residues predominate over residues 269 to 280 (RQVRQARRRGKN). Residues 281–299 (KEREKDRSKGVKDPEAREL) are compositionally biased toward basic and acidic residues. A compositionally biased stretch (basic residues) spans 300–309 (IKKKRNRNRQ). The N-linked (GlcNAc...) asparagine glycan is linked to N332. TSP type-1 domains lie at 360–416 (ECQV…LSQG), 423–510 (ATYG…IPCP), 512–574 (ECEV…PACY), 634–695 (DCVL…HPCT), 696–769 (VYHW…LPCK), 771–831 (DCIV…QACQ), 832–904 (SYRW…IPCQ), 906–959 (DCQL…CPCD), 960–1033 (KYNA…IPCP), 1035–1095 (DCKL…SDCN), 1096–1163 (QYLW…LPCP), 1166–1220 (CVIS…KNCY), 1221–1284 (HYDY…VECP), 1286–1341 (NCQL…KPCY), 1342–1412 (RWQY…QPCP), and 1414–1475 (DCYL…GQCY). 3 disulfides stabilise this stretch: C435-C505, C455-C509, and C466-C494. A glycan (N-linked (GlcNAc...) asparagine) is linked at N450. N500 carries an N-linked (GlcNAc...) asparagine glycan. 2 disulfides stabilise this stretch: C635/C677 and C646/C650. An N-linked (GlcNAc...) asparagine glycan is attached at N679. Disulfide bonds link C689–C694, C707–C764, C728–C768, C739–C752, C772–C814, C783–C787, and C824–C830. An N-linked (GlcNAc...) asparagine glycan is attached at N717. N-linked (GlcNAc...) asparagine glycosylation is present at N968. 6 disulfide bridges follow: C972/C1028, C994/C1032, C1005/C1018, C1036/C1073, C1047/C1051, and C1090/C1094. N-linked (GlcNAc...) asparagine glycosylation occurs at N1043. N1182 is a glycosylation site (N-linked (GlcNAc...) asparagine). C1213 and C1219 are joined by a disulfide. N1225 is a glycosylation site (N-linked (GlcNAc...) asparagine). Cystine bridges form between C1232/C1279, C1240/C1283, C1251/C1264, C1287/C1325, C1298/C1302, C1335/C1340, C1351/C1407, C1358/C1411, C1369/C1388, C1415/C1459, C1426/C1430, and C1469/C1474. The N-linked (GlcNAc...) asparagine glycan is linked to N1276. N1366 is a glycosylation site (N-linked (GlcNAc...) asparagine). N-linked (GlcNAc...) asparagine glycosylation is found at N1500 and N1547. Residues 1570–1591 (DVKTSRAVHPTQPSSNPAGRGR) are disordered. A helical membrane pass occupies residues 1608 to 1628 (VYGVAAGAFVLLIFIVSMIYL). Over 1629–1657 (ACKKPKKPQRRQNNRLKPLTLAYDGDADM) the chain is Cytoplasmic.

In terms of processing, proteolytic cleavage in the extracellular region generates a 210 kDa soluble form. Extensively N-glycosylated. Detected on kidney podocytes along the glomerular capillary wall (at protein level).

Its subcellular location is the cell membrane. The protein resides in the cell projection. The protein localises to the secreted. Its function is as follows. Plays a role in actin cytoskeleton rearrangement. Functionally, the soluble form promotes endothelial cell migration and filopodia formation during sprouting angiogenesis via a FAK-dependent mechanism. This is Thrombospondin type-1 domain-containing protein 7A (THSD7A) from Homo sapiens (Human).